Reading from the N-terminus, the 284-residue chain is D-tagatose-1,6-bisphosphate aldolase subunit GatY (284 aa).

Aspartate 82 acts as the Proton donor in catalysis. Zn(2+)-binding residues include histidine 83 and histidine 180. Glycine 181 is a binding site for dihydroxyacetone phosphate. Histidine 208 serves as a coordination point for Zn(2+). Residues 209-211 (GAS) and 230-233 (NVAT) contribute to the dihydroxyacetone phosphate site.

It belongs to the class II fructose-bisphosphate aldolase family. TagBP aldolase GatY subfamily. As to quaternary structure, forms a complex with GatZ. The cofactor is Zn(2+).

The enzyme catalyses D-tagatofuranose 1,6-bisphosphate = D-glyceraldehyde 3-phosphate + dihydroxyacetone phosphate. Its pathway is carbohydrate metabolism; D-tagatose 6-phosphate degradation; D-glyceraldehyde 3-phosphate and glycerone phosphate from D-tagatose 6-phosphate: step 2/2. In terms of biological role, catalytic subunit of the tagatose-1,6-bisphosphate aldolase GatYZ, which catalyzes the reversible aldol condensation of dihydroxyacetone phosphate (DHAP or glycerone-phosphate) with glyceraldehyde 3-phosphate (G3P) to produce tagatose 1,6-bisphosphate (TBP). Requires GatZ subunit for full activity and stability. Is involved in the catabolism of galactitol. This is D-tagatose-1,6-bisphosphate aldolase subunit GatY from Escherichia coli O157:H7.